A 382-amino-acid polypeptide reads, in one-letter code: 1-deoxy-D-xylulose 5-phosphate reductoisomerase (382 aa).

6 residues coordinate NADPH: Thr10, Gly11, Ser12, Ile13, Gly36, and Asn122. Lys123 provides a ligand contact to 1-deoxy-D-xylulose 5-phosphate. Glu124 contacts NADPH. Asp148 provides a ligand contact to Mn(2+). Positions 149, 150, 174, and 197 each coordinate 1-deoxy-D-xylulose 5-phosphate. A Mn(2+)-binding site is contributed by Glu150. Gly203 contributes to the NADPH binding site. 1-deoxy-D-xylulose 5-phosphate-binding residues include Ser210, Asn215, Lys216, and Glu219. Position 219 (Glu219) interacts with Mn(2+).

The protein belongs to the DXR family. Requires Mg(2+) as cofactor. The cofactor is Mn(2+).

The catalysed reaction is 2-C-methyl-D-erythritol 4-phosphate + NADP(+) = 1-deoxy-D-xylulose 5-phosphate + NADPH + H(+). It functions in the pathway isoprenoid biosynthesis; isopentenyl diphosphate biosynthesis via DXP pathway; isopentenyl diphosphate from 1-deoxy-D-xylulose 5-phosphate: step 1/6. Catalyzes the NADPH-dependent rearrangement and reduction of 1-deoxy-D-xylulose-5-phosphate (DXP) to 2-C-methyl-D-erythritol 4-phosphate (MEP). The polypeptide is 1-deoxy-D-xylulose 5-phosphate reductoisomerase (Chlorobium phaeobacteroides (strain BS1)).